The following is a 319-amino-acid chain: NADH-quinone oxidoreductase subunit H 1 (319 aa).

8 consecutive transmembrane segments (helical) span residues 1–21 (MIGL…LLVV), 74–94 (FAYI…FGVI), 107–127 (VGVL…VLGA), 147–167 (LAYE…AGSL), 179–199 (VWFV…GVAA), 238–258 (VLLV…GPWL), 262–282 (IWFG…RATL), and 293–313 (FAWK…GIVV).

Belongs to the complex I subunit 1 family. NDH-1 is composed of 14 different subunits. Subunits NuoA, H, J, K, L, M, N constitute the membrane sector of the complex.

The protein resides in the cell inner membrane. It carries out the reaction a quinone + NADH + 5 H(+)(in) = a quinol + NAD(+) + 4 H(+)(out). Functionally, NDH-1 shuttles electrons from NADH, via FMN and iron-sulfur (Fe-S) centers, to quinones in the respiratory chain. The immediate electron acceptor for the enzyme in this species is believed to be ubiquinone. Couples the redox reaction to proton translocation (for every two electrons transferred, four hydrogen ions are translocated across the cytoplasmic membrane), and thus conserves the redox energy in a proton gradient. This subunit may bind ubiquinone. This Rhodopseudomonas palustris (strain BisB5) protein is NADH-quinone oxidoreductase subunit H 1.